The primary structure comprises 187 residues: Ribosome-recycling factor (187 aa).

It belongs to the RRF family.

Its subcellular location is the cytoplasm. Responsible for the release of ribosomes from messenger RNA at the termination of protein biosynthesis. May increase the efficiency of translation by recycling ribosomes from one round of translation to another. The sequence is that of Ribosome-recycling factor from Paracoccus denitrificans (strain Pd 1222).